Reading from the N-terminus, the 159-residue chain is Large ribosomal subunit protein uL10 (159 aa).

It belongs to the universal ribosomal protein uL10 family. Part of the ribosomal stalk of the 50S ribosomal subunit. The N-terminus interacts with L11 and the large rRNA to form the base of the stalk. The C-terminus forms an elongated spine to which L12 dimers bind in a sequential fashion forming a multimeric L10(L12)X complex.

In terms of biological role, forms part of the ribosomal stalk, playing a central role in the interaction of the ribosome with GTP-bound translation factors. This chain is Large ribosomal subunit protein uL10, found in Campylobacter lari (strain RM2100 / D67 / ATCC BAA-1060).